The chain runs to 65 residues: Large ribosomal subunit protein bL35 (65 aa).

Residues 23–44 (KRMKAGKQHILTKKSQKTKRNL) form a disordered region.

This sequence belongs to the bacterial ribosomal protein bL35 family.

The chain is Large ribosomal subunit protein bL35 from Lachnoclostridium phytofermentans (strain ATCC 700394 / DSM 18823 / ISDg) (Clostridium phytofermentans).